The sequence spans 273 residues: Putative pyruvate, phosphate dikinase regulatory protein (273 aa).

151 to 158 (GVSRTSKT) is an ADP binding site.

This sequence belongs to the pyruvate, phosphate/water dikinase regulatory protein family. PDRP subfamily.

The catalysed reaction is N(tele)-phospho-L-histidyl/L-threonyl-[pyruvate, phosphate dikinase] + ADP = N(tele)-phospho-L-histidyl/O-phospho-L-threonyl-[pyruvate, phosphate dikinase] + AMP + H(+). It carries out the reaction N(tele)-phospho-L-histidyl/O-phospho-L-threonyl-[pyruvate, phosphate dikinase] + phosphate + H(+) = N(tele)-phospho-L-histidyl/L-threonyl-[pyruvate, phosphate dikinase] + diphosphate. Its function is as follows. Bifunctional serine/threonine kinase and phosphorylase involved in the regulation of the pyruvate, phosphate dikinase (PPDK) by catalyzing its phosphorylation/dephosphorylation. The sequence is that of Putative pyruvate, phosphate dikinase regulatory protein from Desulfitobacterium hafniense (strain Y51).